Here is a 439-residue protein sequence, read N- to C-terminus: Aspartate--tRNA(Asp/Asn) ligase (439 aa).

Glu-177 provides a ligand contact to L-aspartate. Positions 199 to 202 (QLYK) are aspartate. Arg-221 lines the L-aspartate pocket. Residues 221-223 (RAE), 229-231 (RHL), and Glu-362 contribute to the ATP site. Positions 362 and 365 each coordinate Mg(2+). The L-aspartate site is built by Ser-365 and Arg-369. 410-413 (GADR) provides a ligand contact to ATP.

The protein belongs to the class-II aminoacyl-tRNA synthetase family. Type 2 subfamily. In terms of assembly, homodimer. Requires Mg(2+) as cofactor.

It localises to the cytoplasm. It catalyses the reaction tRNA(Asx) + L-aspartate + ATP = L-aspartyl-tRNA(Asx) + AMP + diphosphate. Functionally, aspartyl-tRNA synthetase with relaxed tRNA specificity since it is able to aspartylate not only its cognate tRNA(Asp) but also tRNA(Asn). Reaction proceeds in two steps: L-aspartate is first activated by ATP to form Asp-AMP and then transferred to the acceptor end of tRNA(Asp/Asn). The sequence is that of Aspartate--tRNA(Asp/Asn) ligase from Methanosphaera stadtmanae (strain ATCC 43021 / DSM 3091 / JCM 11832 / MCB-3).